We begin with the raw amino-acid sequence, 263 residues long: Ribonuclease HII (263 aa).

In terms of domain architecture, RNase H type-2 spans 71 to 262 (QAIAGIDEVG…VKSMCCDSTN (192 aa)). A divalent metal cation-binding residues include Asp-77, Glu-78, and Asp-172.

Belongs to the RNase HII family. The cofactor is Mn(2+). It depends on Mg(2+) as a cofactor.

Its subcellular location is the cytoplasm. The catalysed reaction is Endonucleolytic cleavage to 5'-phosphomonoester.. In terms of biological role, endonuclease that specifically degrades the RNA of RNA-DNA hybrids. This Streptococcus pyogenes serotype M4 (strain MGAS10750) protein is Ribonuclease HII.